The following is a 122-amino-acid chain: UPF0102 protein CE1920 (122 aa).

This sequence belongs to the UPF0102 family.

The protein is UPF0102 protein CE1920 of Corynebacterium efficiens (strain DSM 44549 / YS-314 / AJ 12310 / JCM 11189 / NBRC 100395).